A 377-amino-acid chain; its full sequence is Palmitoyltransferase ZDHHC16 (377 aa).

The Cytoplasmic portion of the chain corresponds to 1–77 (MRGQRSLLLG…VYWLVDNVIR (77 aa)). A helical membrane pass occupies residues 78 to 98 (WFGVVFVVLVIVLTGSIVAIA). Residues 99–116 (YLCVLPLILRTYSVPRLC) are Lumenal-facing. A helical membrane pass occupies residues 117 to 137 (WHFFYSHWNLILIVFHYYQAI). Residues 138 to 198 (TTPPGYPPQG…NNCVGHYNHR (61 aa)) are Cytoplasmic-facing. The DHHC domain maps to 155–205 (SICKKCIYPKPARTHHCSICNRCVLKMDHHCPWLNNCVGHYNHRYFFSFCF). Cys185 (S-palmitoyl cysteine intermediate) is an active-site residue. The helical transmembrane segment at 199–219 (YFFSFCFFMTLGCVYCSYGSW) threads the bilayer. Residues 220–266 (DLFREAYAAIEKMKQLDKNKLQAVANQTYHQTPPPIFSFRERMTHKS) are Lumenal-facing. A helical transmembrane segment spans residues 267 to 287 (LVYLWFLCSSVALALGALTVW). At 288–377 (HAVLISRGET…TAHSASVMAV (90 aa)) the chain is on the cytoplasmic side.

It belongs to the DHHC palmitoyltransferase family. Interacts with ABL1. Interacts with COPS5/JAB1.

It is found in the endoplasmic reticulum membrane. The enzyme catalyses L-cysteinyl-[protein] + hexadecanoyl-CoA = S-hexadecanoyl-L-cysteinyl-[protein] + CoA. Functionally, palmitoyl acyltransferase that mediates palmitoylation of proteins such as PLN and ZDHHC6. Required during embryonic heart development and cardiac function, possibly by mediating palmitoylation of PLN, thereby affecting PLN phosphorylation and homooligomerization. Also required for eye development. Palmitoylates ZDHHC6, affecting the quaternary assembly of ZDHHC6, its localization, stability and function. May play a role in DNA damage response. May be involved in apoptosis regulation. Involved in the proliferation of neural stem cells by regulating the FGF/ERK pathway. This Macaca fascicularis (Crab-eating macaque) protein is Palmitoyltransferase ZDHHC16.